The chain runs to 438 residues: UDP-N-acetylmuramoylalanine--D-glutamate ligase (438 aa).

112–118 (GSNGKST) contacts ATP.

It belongs to the MurCDEF family.

It localises to the cytoplasm. It carries out the reaction UDP-N-acetyl-alpha-D-muramoyl-L-alanine + D-glutamate + ATP = UDP-N-acetyl-alpha-D-muramoyl-L-alanyl-D-glutamate + ADP + phosphate + H(+). It functions in the pathway cell wall biogenesis; peptidoglycan biosynthesis. Its function is as follows. Cell wall formation. Catalyzes the addition of glutamate to the nucleotide precursor UDP-N-acetylmuramoyl-L-alanine (UMA). The sequence is that of UDP-N-acetylmuramoylalanine--D-glutamate ligase from Shigella boydii serotype 4 (strain Sb227).